The chain runs to 336 residues: Fructose-1,6-bisphosphatase class 1 (336 aa).

4 residues coordinate Mg(2+): glutamate 90, aspartate 112, leucine 114, and aspartate 115. Substrate-binding positions include 115–118, asparagine 211, and lysine 277; that span reads DGSS. Glutamate 283 provides a ligand contact to Mg(2+).

This sequence belongs to the FBPase class 1 family. Homotetramer. It depends on Mg(2+) as a cofactor.

It localises to the cytoplasm. It carries out the reaction beta-D-fructose 1,6-bisphosphate + H2O = beta-D-fructose 6-phosphate + phosphate. It functions in the pathway carbohydrate biosynthesis; gluconeogenesis. In Stutzerimonas stutzeri (strain A1501) (Pseudomonas stutzeri), this protein is Fructose-1,6-bisphosphatase class 1.